Here is a 307-residue protein sequence, read N- to C-terminus: 4-hydroxythreonine-4-phosphate dehydrogenase (307 aa).

The substrate site is built by H126 and T127. 3 residues coordinate a divalent metal cation: H156, H195, and H251. Substrate contacts are provided by K259, N268, and R277.

Belongs to the PdxA family. As to quaternary structure, homodimer. It depends on Zn(2+) as a cofactor. Requires Mg(2+) as cofactor. Co(2+) is required as a cofactor.

Its subcellular location is the cytoplasm. The enzyme catalyses 4-(phosphooxy)-L-threonine + NAD(+) = 3-amino-2-oxopropyl phosphate + CO2 + NADH. It participates in cofactor biosynthesis; pyridoxine 5'-phosphate biosynthesis; pyridoxine 5'-phosphate from D-erythrose 4-phosphate: step 4/5. Functionally, catalyzes the NAD(P)-dependent oxidation of 4-(phosphooxy)-L-threonine (HTP) into 2-amino-3-oxo-4-(phosphooxy)butyric acid which spontaneously decarboxylates to form 3-amino-2-oxopropyl phosphate (AHAP). The polypeptide is 4-hydroxythreonine-4-phosphate dehydrogenase (Helicobacter pylori (strain J99 / ATCC 700824) (Campylobacter pylori J99)).